The primary structure comprises 301 residues: Dihydroorotate dehydrogenase B (NAD(+)), catalytic subunit (301 aa).

Substrate is bound by residues Lys-44, Asn-68–Leu-72, and Asn-122. Lys-44–Ser-45 contacts FMN. An FMN-binding site is contributed by Asn-122. The Nucleophile role is filled by Cys-125. FMN is bound by residues Lys-160 and Ile-186. Substrate is bound at residue Asn-187 to Thr-188. FMN is bound by residues Gly-212, Gly-238–Gly-239, and Gly-260–Ser-261.

It belongs to the dihydroorotate dehydrogenase family. Type 1 subfamily. Heterotetramer of 2 PyrK and 2 PyrD type B subunits. FMN serves as cofactor.

It is found in the cytoplasm. It carries out the reaction (S)-dihydroorotate + NAD(+) = orotate + NADH + H(+). Its pathway is pyrimidine metabolism; UMP biosynthesis via de novo pathway; orotate from (S)-dihydroorotate (NAD(+) route): step 1/1. Its function is as follows. Catalyzes the conversion of dihydroorotate to orotate with NAD(+) as electron acceptor. The protein is Dihydroorotate dehydrogenase B (NAD(+)), catalytic subunit (pyrD) of Methanocella arvoryzae (strain DSM 22066 / NBRC 105507 / MRE50).